Here is a 248-residue protein sequence, read N- to C-terminus: Probable phosphatase VPA0505 (248 aa).

Residues histidine 8, histidine 10, histidine 16, histidine 41, glutamate 74, histidine 102, histidine 132, aspartate 194, and histidine 196 each coordinate Zn(2+).

It belongs to the PHP family. It depends on Zn(2+) as a cofactor.

The sequence is that of Probable phosphatase VPA0505 from Vibrio parahaemolyticus serotype O3:K6 (strain RIMD 2210633).